Consider the following 342-residue polypeptide: Anthranilate phosphoribosyltransferase (342 aa).

5-phospho-alpha-D-ribose 1-diphosphate is bound by residues Gly-84, 87–88 (GD), Thr-92, 94–97 (NIST), 112–120 (KHGNRGVSS), and Ser-124. Position 84 (Gly-84) interacts with anthranilate. Mg(2+) is bound at residue Ser-96. Residue Asn-115 participates in anthranilate binding. Arg-170 serves as a coordination point for anthranilate. Mg(2+) is bound by residues Asp-229 and Glu-230.

The protein belongs to the anthranilate phosphoribosyltransferase family. Homodimer. The cofactor is Mg(2+).

It carries out the reaction N-(5-phospho-beta-D-ribosyl)anthranilate + diphosphate = 5-phospho-alpha-D-ribose 1-diphosphate + anthranilate. It functions in the pathway amino-acid biosynthesis; L-tryptophan biosynthesis; L-tryptophan from chorismate: step 2/5. Its function is as follows. Catalyzes the transfer of the phosphoribosyl group of 5-phosphorylribose-1-pyrophosphate (PRPP) to anthranilate to yield N-(5'-phosphoribosyl)-anthranilate (PRA). The protein is Anthranilate phosphoribosyltransferase of Cupriavidus metallidurans (strain ATCC 43123 / DSM 2839 / NBRC 102507 / CH34) (Ralstonia metallidurans).